A 179-amino-acid chain; its full sequence is Large ribosomal subunit protein uL6 (179 aa).

It belongs to the universal ribosomal protein uL6 family. Part of the 50S ribosomal subunit.

In terms of biological role, this protein binds to the 23S rRNA, and is important in its secondary structure. It is located near the subunit interface in the base of the L7/L12 stalk, and near the tRNA binding site of the peptidyltransferase center. This is Large ribosomal subunit protein uL6 from Koribacter versatilis (strain Ellin345).